Here is a 932-residue protein sequence, read N- to C-terminus: Protocadherin gamma-A6 (932 aa).

An N-terminal signal peptide occupies residues 1 to 29 (MAPPQRHPQRSEQVLLLTLLGTLWGAAAA). Cadherin domains are found at residues 30 to 133 (QIRY…TPRF), 134 to 242 (LKEE…TPMF), 243 to 347 (TQPV…VPEV), 348 to 452 (VVTS…PPTF), 453 to 562 (PHSS…APEI), and 570 to 682 (DGST…EPSA). Residues 30–692 (QIRYSIPEEL…KPNDSDLTLY (663 aa)) are Extracellular-facing. Asparagine 81 carries an N-linked (GlcNAc...) asparagine glycan. 2 N-linked (GlcNAc...) asparagine glycosylation sites follow: asparagine 419 and asparagine 545. Asparagine 685 is a glycosylation site (N-linked (GlcNAc...) asparagine). The chain crosses the membrane as a helical span at residues 693 to 713 (LVVAVAAVSCVFLAFVIVLLA). Residues 714–932 (LRLQRWHKSR…KKKSGKKEKK (219 aa)) are Cytoplasmic-facing. Disordered regions lie at residues 804–841 (PRQL…WPNN) and 902–932 (ATLT…KEKK). Positions 806–841 (QLQQAPPNTDWRFSQAQRPGTSGSQNGDDTGTWPNN) are enriched in polar residues. A compositionally biased stretch (basic residues) spans 922 to 932 (NKKKSGKKEKK).

It localises to the cell membrane. Its function is as follows. Potential calcium-dependent cell-adhesion protein. May be involved in the establishment and maintenance of specific neuronal connections in the brain. This is Protocadherin gamma-A6 (PCDHGA6) from Homo sapiens (Human).